The primary structure comprises 125 residues: Large ribosomal subunit protein bL12 (125 aa).

It belongs to the bacterial ribosomal protein bL12 family. Homodimer. Part of the ribosomal stalk of the 50S ribosomal subunit. Forms a multimeric L10(L12)X complex, where L10 forms an elongated spine to which 2 to 4 L12 dimers bind in a sequential fashion. Binds GTP-bound translation factors.

Forms part of the ribosomal stalk which helps the ribosome interact with GTP-bound translation factors. Is thus essential for accurate translation. The polypeptide is Large ribosomal subunit protein bL12 (Bradyrhizobium sp. (strain ORS 278)).